Here is a 371-residue protein sequence, read N- to C-terminus: UDP-N-acetylglucosamine--N-acetylmuramyl-(pentapeptide) pyrophosphoryl-undecaprenol N-acetylglucosamine transferase (371 aa).

UDP-N-acetyl-alpha-D-glucosamine-binding positions include 15 to 17, asparagine 126, arginine 172, serine 199, isoleucine 256, 275 to 280, and glutamine 301; these read TGG and ALTVSE.

Belongs to the glycosyltransferase 28 family. MurG subfamily.

The protein localises to the cell inner membrane. It carries out the reaction di-trans,octa-cis-undecaprenyl diphospho-N-acetyl-alpha-D-muramoyl-L-alanyl-D-glutamyl-meso-2,6-diaminopimeloyl-D-alanyl-D-alanine + UDP-N-acetyl-alpha-D-glucosamine = di-trans,octa-cis-undecaprenyl diphospho-[N-acetyl-alpha-D-glucosaminyl-(1-&gt;4)]-N-acetyl-alpha-D-muramoyl-L-alanyl-D-glutamyl-meso-2,6-diaminopimeloyl-D-alanyl-D-alanine + UDP + H(+). The protein operates within cell wall biogenesis; peptidoglycan biosynthesis. Functionally, cell wall formation. Catalyzes the transfer of a GlcNAc subunit on undecaprenyl-pyrophosphoryl-MurNAc-pentapeptide (lipid intermediate I) to form undecaprenyl-pyrophosphoryl-MurNAc-(pentapeptide)GlcNAc (lipid intermediate II). The polypeptide is UDP-N-acetylglucosamine--N-acetylmuramyl-(pentapeptide) pyrophosphoryl-undecaprenol N-acetylglucosamine transferase (Francisella tularensis subsp. tularensis (strain FSC 198)).